The primary structure comprises 106 residues: Large ribosomal subunit protein eL42A (106 aa).

Lys-40 is modified (N6-methyllysine; by RKM3). The residue at position 55 (Lys-55) is an N6-methyllysine; by RKM4.

It belongs to the eukaryotic ribosomal protein eL42 family. As to quaternary structure, component of the large ribosomal subunit (LSU). Mature yeast ribosomes consist of a small (40S) and a large (60S) subunit. The 40S small subunit contains 1 molecule of ribosomal RNA (18S rRNA) and 33 different proteins (encoded by 57 genes). The large 60S subunit contains 3 rRNA molecules (25S, 5.8S and 5S rRNA) and 46 different proteins (encoded by 81 genes). Post-translationally, in wild-type cells, 78% of L42 is monomethylated at both Lys-40 and Lys-55, and 22% are a mixture of species with either residue monomethylated.

The protein resides in the cytoplasm. In terms of biological role, component of the ribosome, a large ribonucleoprotein complex responsible for the synthesis of proteins in the cell. The small ribosomal subunit (SSU) binds messenger RNAs (mRNAs) and translates the encoded message by selecting cognate aminoacyl-transfer RNA (tRNA) molecules. The large subunit (LSU) contains the ribosomal catalytic site termed the peptidyl transferase center (PTC), which catalyzes the formation of peptide bonds, thereby polymerizing the amino acids delivered by tRNAs into a polypeptide chain. The nascent polypeptides leave the ribosome through a tunnel in the LSU and interact with protein factors that function in enzymatic processing, targeting, and the membrane insertion of nascent chains at the exit of the ribosomal tunnel. This Saccharomyces cerevisiae (strain ATCC 204508 / S288c) (Baker's yeast) protein is Large ribosomal subunit protein eL42A.